A 574-amino-acid polypeptide reads, in one-letter code: Arginine--tRNA ligase (574 aa).

The 'HIGH' region signature appears at 121–131 (PNIAKEMHIGH).

The protein belongs to the class-I aminoacyl-tRNA synthetase family. As to quaternary structure, monomer.

The protein localises to the cytoplasm. It catalyses the reaction tRNA(Arg) + L-arginine + ATP = L-arginyl-tRNA(Arg) + AMP + diphosphate. The sequence is that of Arginine--tRNA ligase from Buchnera aphidicola subsp. Acyrthosiphon pisum (strain 5A).